A 397-amino-acid polypeptide reads, in one-letter code: Phosphoglycerate kinase (397 aa).

Substrate is bound by residues 26–28, Arg42, 65–68, Arg119, and Arg152; these read DLN and HLGR. Residues Lys203, Glu325, and 351 to 354 contribute to the ATP site; that span reads GGDT.

It belongs to the phosphoglycerate kinase family. In terms of assembly, monomer.

The protein resides in the cytoplasm. The enzyme catalyses (2R)-3-phosphoglycerate + ATP = (2R)-3-phospho-glyceroyl phosphate + ADP. It participates in carbohydrate degradation; glycolysis; pyruvate from D-glyceraldehyde 3-phosphate: step 2/5. The protein is Phosphoglycerate kinase of Bordetella bronchiseptica (strain ATCC BAA-588 / NCTC 13252 / RB50) (Alcaligenes bronchisepticus).